The sequence spans 2153 residues: Genome polyprotein (2153 aa).

Residue Gly2 is the site of N-myristoyl glycine; by host attachment. At 2 to 1466 (GAQVSRQNVG…DLNIANSIIT (1465 aa)) the chain is on the cytoplasmic side. The interval 565–582 (PITQNPVERYVDEVLNEV) is amphipathic alpha-helix. Catalysis depends on for protease 2A activity residues His871 and Asp888. Cys905 and Cys907 together coordinate Zn(2+). The active-site For protease 2A activity is the Cys959. Cys965 and His967 together coordinate Zn(2+). The membrane-binding stretch occupies residues 1091–1160 (SDSWLKKFTE…NLRAADTNTQ (70 aa)). Positions 1091–1224 (SDSWLKKFTE…PPGTGKSITT (134 aa)) are oligomerization. The interval 1112–1116 (GNKIS) is RNA-binding. An SF3 helicase domain is found at 1186 to 1346 (KRIKVLYHKC…YKDNQGKLDV (161 aa)). Residues Cys1353, Cys1364, and Cys1369 each coordinate Zn(2+). The C4-type; degenerate zinc-finger motif lies at 1353 to 1369 (CDVDSKIGNAKCCPFVC). An RNA-binding region spans residues 1396 to 1403 (EDKRRRQV). Residues 1407-1412 (MSAIFQ) are oligomerization. An intramembrane segment occupies 1467–1482 (IIANIISIAGIIYIIY). At 1483 to 2153 (KLFCSLQGPY…LLRHEWYEKF (671 aa)) the chain is on the cytoplasmic side. Tyr1492 bears the O-(5'-phospho-RNA)-tyrosine mark. A Peptidase C3 domain is found at 1511–1689 (GPEEEFGMSI…FSSMLLRSYF (179 aa)). Residues His1550, Glu1581, and Cys1657 each act as for protease 3C activity in the active site. The RdRp catalytic domain maps to 1921–2034 (DCIMAFDYTN…SYKYKLDMEA (114 aa)). Asp1927 and Asp2020 together coordinate Mg(2+).

Belongs to the picornaviruses polyprotein family. In terms of assembly, interacts with capsid protein VP1 and capsid protein VP3 to form heterotrimeric protomers. As to quaternary structure, interacts with capsid protein VP0, and capsid protein VP3 to form heterotrimeric protomers. Five protomers subsequently associate to form pentamers which serve as building blocks for the capsid. Interacts with capsid protein VP2, capsid protein VP3 and capsid protein VP4 following cleavage of capsid protein VP0. Interacts with capsid protein VP1 and capsid protein VP3 in the mature capsid. In terms of assembly, interacts with capsid protein VP0 and capsid protein VP1 to form heterotrimeric protomers. Five protomers subsequently associate to form pentamers which serve as building blocks for the capsid. Interacts with capsid protein VP4 in the mature capsid. Interacts with protein 2C; this interaction may be important for virion morphogenesis. As to quaternary structure, interacts with capsid protein VP1 and capsid protein VP3. Homodimer. In terms of assembly, homohexamer; forms a hexameric ring structure with 6-fold symmetry characteristic of AAA+ ATPases. Interacts (via N-terminus) with host RTN3 (via reticulon domain); this interaction is important for viral replication. Interacts with capsid protein VP3; this interaction may be important for virion morphogenesis. As to quaternary structure, interacts with protein 3CD. Homodimer. Interacts with host GBF1. Interacts (via GOLD domain) with host ACBD3 (via GOLD domain); this interaction allows the formation of a viral protein 3A/ACBD3 heterotetramer with a 2:2 stoichiometry, which will stimulate the recruitment of host PI4KB in order to synthesize PI4P at the viral RNA replication sites. In terms of assembly, interacts with RNA-directed RNA polymerase. As to quaternary structure, interacts with protein 3AB and with RNA-directed RNA polymerase. Interacts with Viral protein genome-linked and with protein 3CD. Mg(2+) is required as a cofactor. Specific enzymatic cleavages in vivo by the viral proteases yield processing intermediates and the mature proteins. In terms of processing, myristoylation is required for the formation of pentamers during virus assembly. Further assembly of 12 pentamers and a molecule of genomic RNA generates the provirion. Post-translationally, during virion maturation, immature virions are rendered infectious following cleavage of VP0 into VP4 and VP2. This maturation seems to be an autocatalytic event triggered by the presence of RNA in the capsid and it is followed by a conformational change infectious virion. Myristoylation is required during RNA encapsidation and formation of the mature virus particle. In terms of processing, VPg is uridylylated by the polymerase into VPg-pUpU. This acts as a nucleotide-peptide primer for the genomic RNA replication.

It localises to the virion. Its subcellular location is the host cytoplasm. It is found in the host cytoplasmic vesicle membrane. The protein resides in the host nucleus. The catalysed reaction is a ribonucleoside 5'-triphosphate + H2O = a ribonucleoside 5'-diphosphate + phosphate + H(+). The enzyme catalyses Selective cleavage of Tyr-|-Gly bond in the picornavirus polyprotein.. It carries out the reaction RNA(n) + a ribonucleoside 5'-triphosphate = RNA(n+1) + diphosphate. It catalyses the reaction Selective cleavage of Gln-|-Gly bond in the poliovirus polyprotein. In other picornavirus reactions Glu may be substituted for Gln, and Ser or Thr for Gly.. Its activity is regulated as follows. Replication or transcription is subject to high level of random mutations by the nucleotide analog ribavirin. In terms of biological role, forms an icosahedral capsid of pseudo T=3 symmetry with capsid proteins VP2 and VP3. The capsid is 300 Angstroms in diameter, composed of 60 copies of each capsid protein and enclosing the viral positive strand RNA genome. Capsid protein VP1 mainly forms the vertices of the capsid. Capsid protein VP1 interacts with host cell receptor to provide virion attachment to target host cells. This attachment induces virion internalization. Tyrosine kinases are probably involved in the entry process. After binding to its receptor, the capsid undergoes conformational changes. Capsid protein VP1 N-terminus (that contains an amphipathic alpha-helix) and capsid protein VP4 are externalized. Together, they shape a pore in the host membrane through which viral genome is translocated to host cell cytoplasm. Forms an icosahedral capsid of pseudo T=3 symmetry with capsid proteins VP2 and VP3. The capsid is 300 Angstroms in diameter, composed of 60 copies of each capsid protein and enclosing the viral positive strand RNA genome. Its function is as follows. Lies on the inner surface of the capsid shell. After binding to the host receptor, the capsid undergoes conformational changes. Capsid protein VP4 is released, Capsid protein VP1 N-terminus is externalized, and together, they shape a pore in the host membrane through which the viral genome is translocated into the host cell cytoplasm. Functionally, component of immature procapsids, which is cleaved into capsid proteins VP4 and VP2 after maturation. Allows the capsid to remain inactive before the maturation step. In terms of biological role, cysteine protease that cleaves viral polyprotein and specific host proteins. It is responsible for the autocatalytic cleavage between the P1 and P2 regions, which is the first cleavage occurring in the polyprotein. Also cleaves the host translation initiation factor EIF4G1, in order to shut down the capped cellular mRNA translation. Inhibits the host nucleus-cytoplasm protein and RNA trafficking by cleaving host members of the nuclear pores. Counteracts stress granule formation probably by antagonizing its assembly or promoting its dissassembly. Plays an essential role in the virus replication cycle by acting as a viroporin. Creates a pore in the host endoplasmic reticulum and as a consequence releases Ca2+ in the cytoplasm of infected cell. In turn, high levels of cytoplasmic calcium may trigger membrane trafficking and transport of viral ER-associated proteins to viroplasms, sites of viral genome replication. Its function is as follows. Induces and associates with structural rearrangements of intracellular membranes. Displays RNA-binding, nucleotide binding and NTPase activities. May play a role in virion morphogenesis and viral RNA encapsidation by interacting with the capsid protein VP3. Functionally, localizes the viral replication complex to the surface of membranous vesicles. It inhibits host cell endoplasmic reticulum-to-Golgi apparatus transport and causes the disassembly of the Golgi complex, possibly through GBF1 interaction. This would result in depletion of MHC, trail receptors and IFN receptors at the host cell surface. Plays an essential role in viral RNA replication by recruiting ACBD3 and PI4KB at the viral replication sites, thereby allowing the formation of the rearranged membranous structures where viral replication takes place. In terms of biological role, acts as a primer for viral RNA replication and remains covalently bound to viral genomic RNA. VPg is uridylylated prior to priming replication into VPg-pUpU. The oriI viral genomic sequence may act as a template for this. The VPg-pUpU is then used as primer on the genomic RNA poly(A) by the RNA-dependent RNA polymerase to replicate the viral genome. During genome replication, the VPg-RNA linkage is removed by the host TDP2, thereby accelerating replication. During the late stage of the replication cycle, host TDP2 is excluded from sites of viral RNA synthesis and encapsidation, allowing for the generation of progeny virions. Involved in the viral replication complex and viral polypeptide maturation. It exhibits protease activity with a specificity and catalytic efficiency that is different from protease 3C. Protein 3CD lacks polymerase activity. Protein 3CD binds to the 5'UTR of the viral genome. Its function is as follows. Major viral protease that mediates proteolytic processing of the polyprotein. Cleaves host EIF5B, contributing to host translation shutoff. Also cleaves host PABPC1, contributing to host translation shutoff. Cleaves host NLRP1, triggers host N-glycine-mediated degradation of the autoinhibitory NLRP1 N-terminal fragment. Functionally, replicates the viral genomic RNA on the surface of intracellular membranes. May form linear arrays of subunits that propagate along a strong head-to-tail interaction called interface-I. Covalently attaches UMP to a tyrosine of VPg, which is used to prime RNA synthesis. The positive stranded RNA genome is first replicated at virus induced membranous vesicles, creating a dsRNA genomic replication form. This dsRNA is then used as template to synthesize positive stranded RNA genomes. ss(+)RNA genomes are either translated, replicated or encapsidated. This Human rhinovirus 16 (HRV-16) protein is Genome polyprotein.